The chain runs to 183 residues: Interleukin-36 beta (183 aa).

A propeptide spanning residues 1-30 (MMAFPPQSCVHVLPPKSIQMWEPNHNTMHG) is cleaved from the precursor.

Belongs to the IL-1 family. Interacts with cargo receptor TMED10; the interaction mediates the translocation from the cytoplasm into the ERGIC (endoplasmic reticulum-Golgi intermediate compartment) and thereby secretion. N-terminal truncation leads to a dramatic enhancement of its activity (&gt;1000-fold).

It is found in the cytoplasm. Its subcellular location is the secreted. Cytokine that binds to and signals through the IL1RL2/IL-36R receptor which in turn activates NF-kappa-B and MAPK signaling pathways in target cells linked to a pro-inflammatory response. Part of the IL-36 signaling system that is thought to be present in epithelial barriers and to take part in local inflammatory response; similar to the IL-1 system with which it shares the coreceptor IL1RAP. Stimulates production of interleukin-6 and interleukin-8 in synovial fibrobasts, articular chondrocytes and mature adipocytes. Induces expression of a number of antimicrobial peptides including beta-defensin 4 and beta-defensin 103 as well as a number of matrix metalloproteases. Seems to be involved in skin inflammatory response by acting on keratinocytes, dendritic cells and indirectly on T-cells to drive tissue infiltration, cell maturation and cell proliferation. Induces the production of pro-inflammatory cytokines in bone marrow-derived dendritic cells (BMDCs), including IL-12, Il-1 beta, IL-6, TNF-alpha and IL-23, and activates p38 MAPK phosphorylation in BMDCs. Involved in dendritic cell maturation by stimulating the surface expression of CD80, CD86 and MHC class II. Induces the production of IFN-gamma, IL-4 and IL-17 by T-helper 1 (Th1) cells, cultured CD4(+) T-cells and splenocytes. The sequence is that of Interleukin-36 beta from Mus musculus (Mouse).